The chain runs to 516 residues: Flavonoid 3',5'-hydroxylase (516 aa).

Position 453 (Cys-453) interacts with heme.

It belongs to the cytochrome P450 family. Heme serves as cofactor.

It catalyses the reaction a 3',5'-unsubstituted flavanone + 2 reduced [NADPH--hemoprotein reductase] + 2 O2 = a 3',5'-dihydroxyflavanone + 2 oxidized [NADPH--hemoprotein reductase] + 2 H2O + 2 H(+). Its pathway is pigment biosynthesis; anthocyanin biosynthesis. Catalyzes the 3'5'-hydroxylation of naringenin and eriodictyol to form 5,7,3,'4',5'-pentahydroxyflavanone and 3',5'-hydroxylation of dihydrokaempferol and dihydroquercetin to form dihydromyricetin. In Gentiana triflora (Clustered gentian), this protein is Flavonoid 3',5'-hydroxylase (CYP75A4).